Consider the following 409-residue polypeptide: Threonine dehydratase-like protein AKTS1-1 (409 aa).

The interval Met-1–Arg-21 is disordered. An N6-(pyridoxal phosphate)lysine modification is found at Lys-111. Residues Asn-138, Gly-239–Leu-243, and Ser-368 contribute to the pyridoxal 5'-phosphate site.

The protein belongs to the serine/threonine dehydratase family. Pyridoxal 5'-phosphate serves as cofactor.

It functions in the pathway mycotoxin biosynthesis. Threonine dehydratase-like protein; part of the gene clusters that mediate the biosynthesis of the host-selective toxins (HSTs) AK-toxins responsible for Japanese pear black spot disease by the Japanese pear pathotype. AK-toxins are esters of 9,10-epoxy 8-hydroxy 9-methyldecatrienoic acid (EDA). On cellular level, AK-toxins affect plasma membrane of susceptible cells and cause a sudden increase in loss of K(+) after a few minutes of toxin treatment. The acyl-CoA ligase AKT1, the hydrolase AKT2 and enoyl-CoA hydratase AKT3 are all involved in the biosynthesis of the AK-, AF- and ACT-toxin common 9,10-epoxy-8-hydroxy-9-methyl-decatrienoic acid (EDA) structural moiety. Part of the EDA biosynthesis occurs in the peroxisome since these 3 enzymes are localized in peroxisomes. The exact roles of the 3 enzymes, as well as of additional AK-toxin clusters enzymes, including AKT4, AKT6 and AKTS1, have still to be elucidated. The Cytochrome P450 monooxygenase AKT7 on the other side functions to limit production of EDA and AK-toxin, probably via the catalysis of a side reaction of EDA or its precursor. In Alternaria alternata (Alternaria rot fungus), this protein is Threonine dehydratase-like protein AKTS1-1.